A 218-amino-acid chain; its full sequence is Guanylate kinase (218 aa).

The 184-residue stretch at 5–188 (GNLFILSAPS…ALLDLTTIVN (184 aa)) folds into the Guanylate kinase-like domain. 12–19 (APSGAGKS) contributes to the ATP binding site.

Belongs to the guanylate kinase family.

Its subcellular location is the cytoplasm. The enzyme catalyses GMP + ATP = GDP + ADP. In terms of biological role, essential for recycling GMP and indirectly, cGMP. The polypeptide is Guanylate kinase (Colwellia psychrerythraea (strain 34H / ATCC BAA-681) (Vibrio psychroerythus)).